Consider the following 152-residue polypeptide: Ribonuclease HI (152 aa).

Residues Met1–Glu142 enclose the RNase H type-1 domain. Positions 10, 48, 70, and 134 each coordinate Mg(2+).

The protein belongs to the RNase H family. As to quaternary structure, monomer. Mg(2+) serves as cofactor.

It localises to the cytoplasm. It catalyses the reaction Endonucleolytic cleavage to 5'-phosphomonoester.. Functionally, endonuclease that specifically degrades the RNA of RNA-DNA hybrids. This Rickettsia prowazekii (strain Madrid E) protein is Ribonuclease HI (rnhA).